A 210-amino-acid chain; its full sequence is Outer-membrane lipoprotein LolB (210 aa).

The N-terminal stretch at 1–18 is a signal peptide; sequence MKKFTKILSLSTLLFLAG. A lipid anchor (N-palmitoyl cysteine) is attached at Cys-19. Residue Cys-19 is the site of S-diacylglycerol cysteine attachment.

The protein belongs to the LolB family. In terms of assembly, monomer.

The protein resides in the cell outer membrane. In terms of biological role, plays a critical role in the incorporation of lipoproteins in the outer membrane after they are released by the LolA protein. The protein is Outer-membrane lipoprotein LolB of Actinobacillus pleuropneumoniae serotype 7 (strain AP76).